The primary structure comprises 574 residues: Proline--tRNA ligase (574 aa).

This sequence belongs to the class-II aminoacyl-tRNA synthetase family. ProS type 1 subfamily. As to quaternary structure, homodimer.

It localises to the cytoplasm. It carries out the reaction tRNA(Pro) + L-proline + ATP = L-prolyl-tRNA(Pro) + AMP + diphosphate. Functionally, catalyzes the attachment of proline to tRNA(Pro) in a two-step reaction: proline is first activated by ATP to form Pro-AMP and then transferred to the acceptor end of tRNA(Pro). As ProRS can inadvertently accommodate and process non-cognate amino acids such as alanine and cysteine, to avoid such errors it has two additional distinct editing activities against alanine. One activity is designated as 'pretransfer' editing and involves the tRNA(Pro)-independent hydrolysis of activated Ala-AMP. The other activity is designated 'posttransfer' editing and involves deacylation of mischarged Ala-tRNA(Pro). The misacylated Cys-tRNA(Pro) is not edited by ProRS. The sequence is that of Proline--tRNA ligase from Anaeromyxobacter sp. (strain K).